The following is a 543-amino-acid chain: Carboxypeptidase Y homolog A (543 aa).

Positions 1–17 (MKVATSALLVGAVSASV) are cleaved as a signal peptide. Positions 18 to 128 (GPQQQVLKFP…KLENYSMRTK (111 aa)) are excised as a propeptide. N-linked (GlcNAc...) asparagine glycans are attached at residues N122 and N213. 5 disulfides stabilise this stretch: C182-C421, C316-C330, C340-C363, C347-C356, and C385-C391. S269 is a catalytic residue. The active site involves D460. N508 is a glycosylation site (N-linked (GlcNAc...) asparagine). H519 is a catalytic residue.

Belongs to the peptidase S10 family.

Its subcellular location is the vacuole. It carries out the reaction Release of a C-terminal amino acid with broad specificity.. In terms of biological role, vacuolar carboxypeptidase involved in degradation of small peptides. Digests preferentially peptides containing an aliphatic or hydrophobic residue in P1' position, as well as methionine, leucine or phenylalanine in P1 position of ester substrate. This chain is Carboxypeptidase Y homolog A (CPYA), found in Leptosphaeria maculans (strain JN3 / isolate v23.1.3 / race Av1-4-5-6-7-8) (Blackleg fungus).